The sequence spans 157 residues: Pyruvoyl-dependent arginine decarboxylase 2 (157 aa).

The residue at position 43 (Ser43) is a Pyruvic acid (Ser).

It belongs to the PdaD family. Requires pyruvate as cofactor.

The catalysed reaction is L-arginine + H(+) = agmatine + CO2. This Archaeoglobus fulgidus (strain ATCC 49558 / DSM 4304 / JCM 9628 / NBRC 100126 / VC-16) protein is Pyruvoyl-dependent arginine decarboxylase 2 (pdaD2).